The primary structure comprises 339 residues: Uroporphyrinogen decarboxylase (339 aa).

Substrate-binding positions include 23–27 (RQAGR), aspartate 72, tyrosine 147, threonine 202, and histidine 315.

Belongs to the uroporphyrinogen decarboxylase family. As to quaternary structure, homodimer.

It localises to the cytoplasm. It catalyses the reaction uroporphyrinogen III + 4 H(+) = coproporphyrinogen III + 4 CO2. The protein operates within porphyrin-containing compound metabolism; protoporphyrin-IX biosynthesis; coproporphyrinogen-III from 5-aminolevulinate: step 4/4. Functionally, catalyzes the decarboxylation of four acetate groups of uroporphyrinogen-III to yield coproporphyrinogen-III. This chain is Uroporphyrinogen decarboxylase, found in Geotalea daltonii (strain DSM 22248 / JCM 15807 / FRC-32) (Geobacter daltonii).